The chain runs to 208 residues: Small ribosomal subunit protein uS4 (208 aa).

In terms of domain architecture, S4 RNA-binding spans 98–158 (GRLDNVVYRM…EKSKKQARIK (61 aa)).

The protein belongs to the universal ribosomal protein uS4 family. In terms of assembly, part of the 30S ribosomal subunit. Contacts protein S5. The interaction surface between S4 and S5 is involved in control of translational fidelity.

In terms of biological role, one of the primary rRNA binding proteins, it binds directly to 16S rRNA where it nucleates assembly of the body of the 30S subunit. With S5 and S12 plays an important role in translational accuracy. The protein is Small ribosomal subunit protein uS4 of Haemophilus ducreyi (strain 35000HP / ATCC 700724).